Consider the following 114-residue polypeptide: T cell receptor beta variable 28 (114 aa).

Positions 1–26 (MGIRLLCRVAFCFLAVGLVDVKVTQS) are cleaved as a signal peptide. Residues 27-114 (SRYLVKRTGE…TSMYLCASSL (88 aa)) form the Ig-like domain. The cysteines at positions 42 and 110 are disulfide-linked. Residue Asn-103 is glycosylated (N-linked (GlcNAc...) asparagine).

As to quaternary structure, alpha-beta TR is a heterodimer composed of an alpha and beta chain; disulfide-linked. The alpha-beta TR is associated with the transmembrane signaling CD3 coreceptor proteins to form the TR-CD3 (TcR or TCR). The assembly of alpha-beta TR heterodimers with CD3 occurs in the endoplasmic reticulum where a single alpha-beta TR heterodimer associates with one CD3D-CD3E heterodimer, one CD3G-CD3E heterodimer and one CD247 homodimer forming a stable octameric structure. CD3D-CD3E and CD3G-CD3E heterodimers preferentially associate with TR alpha and TR beta chains, respectively. The association of the CD247 homodimer is the last step of TcR assembly in the endoplasmic reticulum and is required for transport to the cell surface.

It localises to the cell membrane. Its function is as follows. V region of the variable domain of T cell receptor (TR) beta chain that participates in the antigen recognition. Alpha-beta T cell receptors are antigen specific receptors which are essential to the immune response and are present on the cell surface of T lymphocytes. Recognize peptide-major histocompatibility (MH) (pMH) complexes that are displayed by antigen presenting cells (APC), a prerequisite for efficient T cell adaptive immunity against pathogens. Binding of alpha-beta TR to pMH complex initiates TR-CD3 clustering on the cell surface and intracellular activation of LCK that phosphorylates the ITAM motifs of CD3G, CD3D, CD3E and CD247 enabling the recruitment of ZAP70. In turn ZAP70 phosphorylates LAT, which recruits numerous signaling molecules to form the LAT signalosome. The LAT signalosome propagates signal branching to three major signaling pathways, the calcium, the mitogen-activated protein kinase (MAPK) kinase and the nuclear factor NF-kappa-B (NF-kB) pathways, leading to the mobilization of transcription factors that are critical for gene expression and essential for T cell growth and differentiation. The T cell repertoire is generated in the thymus, by V-(D)-J rearrangement. This repertoire is then shaped by intrathymic selection events to generate a peripheral T cell pool of self-MH restricted, non-autoaggressive T cells. Post-thymic interaction of alpha-beta TR with the pMH complexes shapes TR structural and functional avidity. In Homo sapiens (Human), this protein is T cell receptor beta variable 28.